The sequence spans 387 residues: uncharacterized protein (387 aa).

The disordered stretch occupies residues 1–23; that stretch reads MSSLPRNAVARNSKMHKKRDSGV. Residues 98 to 129 are a coiled coil; sequence KIARDLKKRQEDYEKTKLEVERLKRSEELANK. The segment at 146–255 is disordered; it reads ENNTVEPNNE…NKKKKKEKNK (110 aa). Composition is skewed to low complexity over residues 162–175 and 182–194; these read EQITEQTVEQTTEQ and EQTTEKTTQQTAE. The segment covering 204 to 213 has biased composition (basic and acidic residues); the sequence is TVEKSGDQST. Over residues 214-231 the composition is skewed to polar residues; it reads EKTTQQTAEESVEQSTEQ.

This is an uncharacterized protein from Acanthamoeba polyphaga mimivirus (APMV).